The following is a 213-amino-acid chain: Ras-related protein Rab-25 (213 aa).

GTP-binding residues include S21, G24, K25, T26, N27, S38, H39, T43, and T44. T26 provides a ligand contact to Mg(2+). 2 short sequence motifs (switch) span residues 35–49 and 67–84; these read NEFS…GVEF and DTAG…YYRG. Positions 44 and 67 each coordinate Mg(2+). The GTP site is built by G70, N125, K126, D128, A156, and L157. 2 S-geranylgeranyl cysteine lipidation sites follow: C209 and C210. C210 is subject to Cysteine methyl ester. The propeptide at 211–213 is removed in mature form; sequence ISL.

It belongs to the small GTPase superfamily. Rab family. As to quaternary structure, interacts (GTP-bound form) with RAB11FIP1, RAB11FIP2, RAB11FIP3 and RAB11FIP4. Interacts (via the hypervariable C-terminal region) with ITGB1 (via the cytoplasmic region); the interaction is GTP-dependent. Interacts with ITGAV. Associates with the integrin alpha-V/beta-1 heterodimer. Interacts with VPS33B. Requires Mg(2+) as cofactor.

The protein localises to the cell membrane. Its subcellular location is the cell projection. It is found in the pseudopodium membrane. The protein resides in the cytoplasmic vesicle. It catalyses the reaction GTP + H2O = GDP + phosphate + H(+). Regulated by guanine nucleotide exchange factors (GEFs) which promote the exchange of bound GDP for free GTP. Regulated by GTPase activating proteins (GAPs) which increase the GTP hydrolysis activity. Inhibited by GDP dissociation inhibitors (GDIs) which prevent Rab-GDP dissociation. The small GTPases Rab are key regulators of intracellular membrane trafficking, from the formation of transport vesicles to their fusion with membranes. Rabs cycle between an inactive GDP-bound form and an active GTP-bound form that is able to recruit to membranes different set of downstream effectors directly responsible for vesicle formation, movement, tethering and fusion. RAB25 regulates epithelial cell differentiation, proliferation and survival, thereby playing key roles in tumorigenesis. Promotes invasive migration of cells in which it functions to localize and maintain integrin alpha-V/beta-1 at the tips of extending pseudopodia. Involved in the regulation of epithelial morphogenesis through the control of CLDN4 expression and localization at tight junctions. May selectively regulate the apical recycling pathway. Together with MYO5B regulates transcytosis. This chain is Ras-related protein Rab-25, found in Mus musculus (Mouse).